Consider the following 160-residue polypeptide: Cytochrome b6-f complex subunit 4 (160 aa).

3 helical membrane-spanning segments follow: residues 36 to 56 (LLYIFPVVILGTIACVVGLAV), 95 to 115 (LLGIALQTLVPLGLMLVPFIE), and 128 to 148 (VAMTVFLFGTFTTIYLGIGAA).

The protein belongs to the cytochrome b family. PetD subfamily. The 4 large subunits of the cytochrome b6-f complex are cytochrome b6, subunit IV (17 kDa polypeptide, PetD), cytochrome f and the Rieske protein, while the 4 small subunits are PetG, PetL, PetM and PetN. The complex functions as a dimer.

It localises to the cellular thylakoid membrane. Component of the cytochrome b6-f complex, which mediates electron transfer between photosystem II (PSII) and photosystem I (PSI), cyclic electron flow around PSI, and state transitions. This Synechococcus sp. (strain CC9902) protein is Cytochrome b6-f complex subunit 4.